We begin with the raw amino-acid sequence, 114 residues long: Cytochrome c2 (114 aa).

Q1 carries the post-translational modification Pyrrolidone carboxylic acid. C13, C16, H17, and M93 together coordinate heme c.

It belongs to the cytochrome c family. Post-translationally, binds 1 heme c group covalently per subunit.

It localises to the periplasm. In terms of biological role, cytochrome c2 is found mainly in purple, non-sulfur, photosynthetic bacteria where it functions as the electron donor to the oxidized bacteriochlorophyll in the photophosphorylation pathway. However, it may also have a role in the respiratory chain and is found in some non-photosynthetic bacteria. The protein is Cytochrome c2 of Rhodopseudomonas palustris.